Consider the following 514-residue polypeptide: Cobyric acid synthase (514 aa).

Residues 258 to 458 (ALMVGVVRLP…IHGIFDNDGL (201 aa)) form the GATase cobBQ-type domain. Cys339 serves as the catalytic Nucleophile. The active site involves His450.

Belongs to the CobB/CobQ family. CobQ subfamily.

Its pathway is cofactor biosynthesis; adenosylcobalamin biosynthesis. In terms of biological role, catalyzes amidations at positions B, D, E, and G on adenosylcobyrinic A,C-diamide. NH(2) groups are provided by glutamine, and one molecule of ATP is hydrogenolyzed for each amidation. This is Cobyric acid synthase from Syntrophobacter fumaroxidans (strain DSM 10017 / MPOB).